The chain runs to 398 residues: Dual-specificity RNA methyltransferase RlmN (398 aa).

Glu119 acts as the Proton acceptor in catalysis. The 240-residue stretch at 125-364 folds into the Radical SAM core domain; it reads EGDRATLCVS…TIVRKTRGDD (240 aa). The cysteines at positions 132 and 369 are disulfide-linked. [4Fe-4S] cluster contacts are provided by Cys139, Cys143, and Cys146. Residues 193 to 194, Ser225, 247 to 249, and Asn326 each bind S-adenosyl-L-methionine; these read GE and SLH. Cys369 serves as the catalytic S-methylcysteine intermediate.

This sequence belongs to the radical SAM superfamily. RlmN family. It depends on [4Fe-4S] cluster as a cofactor.

Its subcellular location is the cytoplasm. The enzyme catalyses adenosine(2503) in 23S rRNA + 2 reduced [2Fe-2S]-[ferredoxin] + 2 S-adenosyl-L-methionine = 2-methyladenosine(2503) in 23S rRNA + 5'-deoxyadenosine + L-methionine + 2 oxidized [2Fe-2S]-[ferredoxin] + S-adenosyl-L-homocysteine. It catalyses the reaction adenosine(37) in tRNA + 2 reduced [2Fe-2S]-[ferredoxin] + 2 S-adenosyl-L-methionine = 2-methyladenosine(37) in tRNA + 5'-deoxyadenosine + L-methionine + 2 oxidized [2Fe-2S]-[ferredoxin] + S-adenosyl-L-homocysteine. In terms of biological role, specifically methylates position 2 of adenine 2503 in 23S rRNA and position 2 of adenine 37 in tRNAs. m2A2503 modification seems to play a crucial role in the proofreading step occurring at the peptidyl transferase center and thus would serve to optimize ribosomal fidelity. This chain is Dual-specificity RNA methyltransferase RlmN, found in Yersinia enterocolitica serotype O:8 / biotype 1B (strain NCTC 13174 / 8081).